A 307-amino-acid chain; its full sequence is Ornithine carbamoyltransferase (307 aa).

Carbamoyl phosphate-binding positions include 50-53, Q77, R101, and 128-131; these read STRT and HPCQ. L-ornithine-binding positions include N160, D224, and 228-229; that span reads SM. Residues 264–265 and R292 contribute to the carbamoyl phosphate site; that span reads CL.

It belongs to the aspartate/ornithine carbamoyltransferase superfamily. OTCase family.

The protein localises to the cytoplasm. It catalyses the reaction carbamoyl phosphate + L-ornithine = L-citrulline + phosphate + H(+). Its pathway is amino-acid biosynthesis; L-arginine biosynthesis; L-arginine from L-ornithine and carbamoyl phosphate: step 1/3. In terms of biological role, reversibly catalyzes the transfer of the carbamoyl group from carbamoyl phosphate (CP) to the N(epsilon) atom of ornithine (ORN) to produce L-citrulline. The sequence is that of Ornithine carbamoyltransferase from Clavibacter michiganensis subsp. michiganensis (strain NCPPB 382).